A 335-amino-acid chain; its full sequence is MTSSAIRINKKPVVLSGIQPSSGMLHLGNYLGALKSFGRMQDDYTTYFMLANLHSMTFPQNPEVLRENTIRIAAQCIAAGIDPAKSIVFLQSDVYQHNQLAWVLGNVCIFGEAARMTQFKDKSGKQGNISTGLFTYPILMASDILLYDSAFVPVGADQKQHLELTRTLARRFNAQYGQTFLVPQPFECSIRIYDLQDPAVKMSKSSATESGTIFLLDSPDKIVKKIMRSVTDSEDVIGYDRETKPGVSNLVVMYSCLTDCTIEQTVNIYSGKKYSVLKKDLSDILVEVCTTIATRTNELLDDKNYIRKILVTASEQARGVAQKTIDRVYEKLGVY.

ATP contacts are provided by residues 19–21 and 28–29; these read QPS and GN. The short motif at 20 to 29 is the 'HIGH' region element; that stretch reads PSSGMLHLGN. Aspartate 143 is a binding site for L-tryptophan. ATP contacts are provided by residues 155-157, isoleucine 192, and 201-205; these read GAD and KMSKS. The 'KMSKS' region signature appears at 201–205; it reads KMSKS.

The protein belongs to the class-I aminoacyl-tRNA synthetase family. In terms of assembly, homodimer.

The protein localises to the cytoplasm. It carries out the reaction tRNA(Trp) + L-tryptophan + ATP = L-tryptophyl-tRNA(Trp) + AMP + diphosphate + H(+). Its function is as follows. Catalyzes the attachment of tryptophan to tRNA(Trp). This chain is Tryptophan--tRNA ligase, found in Tropheryma whipplei (strain Twist) (Whipple's bacillus).